The sequence spans 81 residues: Sulfur carrier protein TusA (81 aa).

Cys19 functions as the Cysteine persulfide intermediate in the catalytic mechanism.

It belongs to the sulfur carrier protein TusA family. In terms of assembly, interacts with IscS.

It is found in the cytoplasm. The protein operates within tRNA modification. Sulfur carrier protein involved in sulfur trafficking in the cell. Part of a sulfur-relay system required for 2-thiolation during synthesis of 2-thiouridine of the modified wobble base 5-methylaminomethyl-2-thiouridine (mnm(5)s(2)U) in tRNA. Interacts with IscS and stimulates its cysteine desulfurase activity. Accepts an activated sulfur from IscS, which is then transferred to TusD, and thus determines the direction of sulfur flow from IscS to 2-thiouridine formation. Also appears to be involved in sulfur transfer for the biosynthesis of molybdopterin. The chain is Sulfur carrier protein TusA from Escherichia coli O17:K52:H18 (strain UMN026 / ExPEC).